A 340-amino-acid polypeptide reads, in one-letter code: Olfactory receptor 5T3 (340 aa).

Over 1 to 55 (MDSTFTGYNLYNLQVKTEMDKLSSGLDIYRNPLKNKTEVTMFILTGFTDDFELQV) the chain is Extracellular. Asparagine 35 carries an N-linked (GlcNAc...) asparagine glycan. Residues 56–76 (FLFLLFFAIYLFTLIGNLGLV) form a helical membrane-spanning segment. Residues 77-84 (VLVIEDSW) are Cytoplasmic-facing. The helical transmembrane segment at 85-105 (LHNPMYYFLSVLSFLDACYST) threads the bilayer. The Extracellular segment spans residues 106 to 129 (VVTPKMLVNFLAKNKSISFIGCAT). Asparagine 119 carries an N-linked (GlcNAc...) asparagine glycan. Cysteine 127 and cysteine 219 are disulfide-bonded. Residues 130 to 150 (QMLLFVTFGTTECFLLAAMAY) form a helical membrane-spanning segment. At 151 to 169 (DHYVAIYNPLLYSVSMSPR) the chain is on the cytoplasmic side. Residues 170-190 (VYVPLITASYVAGILHATIHI) form a helical membrane-spanning segment. Topologically, residues 191–226 (VATFSLSFCGSNEIRHVFCDMPPLLAISCSDTHTNQ) are extracellular. Residues 227-247 (LLLFYFVGSIEIVTILIVLIS) traverse the membrane as a helical segment. Residues 248–267 (CDFILLSILKMHSAKGRQKA) are Cytoplasmic-facing. The chain crosses the membrane as a helical span at residues 268 to 288 (FSTCGSHLTGVTIYHGTILVS). Residues 289–301 (YMRPSSSYASDHD) lie on the Extracellular side of the membrane. A helical membrane pass occupies residues 302 to 322 (IIVSIFYTIVIPKLNPIIYSL). Topologically, residues 323–340 (RNKEVKKAVKKMLKLVYK) are cytoplasmic.

This sequence belongs to the G-protein coupled receptor 1 family.

The protein resides in the cell membrane. In terms of biological role, odorant receptor. The chain is Olfactory receptor 5T3 (OR5T3) from Homo sapiens (Human).